Here is a 439-residue protein sequence, read N- to C-terminus: Histone acetyltransferase GCN5 (439 aa).

Basic and acidic residues-rich tracts occupy residues 1 to 28 and 39 to 59; these read MVTK…KLEN and ETNK…KETE. Residues 1 to 59 are disordered; that stretch reads MVTKHQIEEDHLDGATTDPEVKRVKLENNVEEIQPEQAETNKQEGTDKENKGKFEKETE. Residues 100 to 255 enclose the N-acetyltransferase domain; the sequence is IEFRVVNNDN…GGTLMQCSML (156 aa). E173 functions as the Proton donor/acceptor in the catalytic mechanism. Acetyl-CoA-binding positions include 177 to 179, 184 to 190, and 216 to 219; these read CAI, QVRGYGA, and YAIG. The 105-residue stretch at 327-431 folds into the Bromo domain; it reads PKRGPHDAAI…KFFNNKVKEI (105 aa).

It belongs to the acetyltransferase family. GCN5 subfamily. Component of the 1.8 MDa SAGA (Spt-Ada-Gcn5 acetyltransferase) complex, which is composed of 19 subunits TRA1, SPT7, TAF5, NGG1/ADA3, SGF73, SPT20/ADA5, SPT8, TAF12, TAF6, HFI1/ADA1, UBP8, GCN5, ADA2, SPT3, SGF29, TAF10, TAF9, SGF11 and SUS1. The SAGA complex is composed of 4 modules, namely the HAT (histone acetyltransferase) module (GCN5, ADA2, NGG1/ADA3 and SGF29), the DUB (deubiquitinating) module (UBP8, SGF11, SGF73 and SUS1), the core or TAF (TBP-associated factor) module (TAF5, TAF6, TAF9, TAF10 and TAF12), and the Tra1 or SPT (Suppressor of Ty) module (TRA1, HFI1/ADA1, SPT3, SPT7, SPT8 and SPT20/ADA5). The Tra1/SPT module binds activators, the core module recruits TBP (TATA-binding protein), the HAT module contains the histone H3 acetyltransferase GCN5, and the DUB module comprises the histone H2B deubiquitinase UBP8. Also identified in an altered form of SAGA, named SALSA (SAGA altered, Spt8 absent) or SLIK (SAGA-like) complex, which contains a C-terminal truncated form of SPT7 and is missing SPT8. However, it has been shown that the SAGA and SAGA-like SALSA/SLIK transcriptional coactivators are structurally and biochemically equivalent. Component of the 0.8 MDa ADA complex, a HAT complex distinct from SAGA, which at least consists of ADA2, NGG1/ADA3, AHC1, AHC2, SGF29 and GCN5. Component of an ADA/GCN5 complex that consists of HFI1/ADA1, ADA2, NGG1/ADA3, SPT20/ADA5 and GCN5 and probably is a subcomplex of SAGA.

Its subcellular location is the nucleus. It is found in the cytoplasm. It catalyses the reaction L-lysyl-[protein] + acetyl-CoA = N(6)-acetyl-L-lysyl-[protein] + CoA + H(+). The enzyme catalyses (2E)-butenoyl-CoA + L-lysyl-[protein] = N(6)-(2E)-butenoyl-L-lysyl-[protein] + CoA + H(+). Its function is as follows. Histone acetyltransferase that acetylates histone H2B to form H2BK11ac and H2BK16ac, histone H3 to form H3K9ac, H3K14ac, H3K18ac, H3K23ac, H3K27ac and H3K36ac, with a lower preference histone H4 to form H4K8ac and H4K16ac, and contributes to H2A.Z acetylation. Acetylation of histones gives a specific tag for epigenetic transcription activation and elongation. Operates in concert with certain DNA-binding transcriptional activators such as GCN4 or HAP2/3/4. Its acetyltransferase activity seems to be dependent on the association in different multisubunit complexes. Component of the transcription coactivator SAGA complex. SAGA acts as a general cofactor required for essentially all RNA polymerase II transcription. At the promoters, SAGA is required for transcription pre-initiation complex (PIC) recruitment. It influences RNA polymerase II transcriptional activity through different activities such as TBP interaction (via core/TAF module) and promoter selectivity, interaction with transcription activators (via Tra1/SPT module), and chromatin modification through histone acetylation (via HAT module) and deubiquitination (via DUB module). SAGA preferentially acetylates histones H3 (to form H3K9ac, H3K14ac, H3K18ac and H3K23ac) and H2B and deubiquitinates histone H2B. SAGA interacts with DNA via upstream activating sequences (UASs). Also identified in a modified version of SAGA named SALSA or SLIK. The cleavage of SPT7 and the absence of the SPT8 subunit in SLIK neither drive any major conformational differences in its structure compared with SAGA, nor significantly affect HAT, DUB, or DNA-binding activities. Component of the ADA histone acetyltransferase complex, which preferentially acetylates nucleosomal histones H3 (to form H3K14ac and H3K18ac) and H2B. In addition to histone acetyltransferase, can use different acyl-CoA substrates, such as (2E)-butenoyl-CoA (crotonyl-CoA) and is able to mediate histone crotonylation. Controls the metaphase-to-anaphase transition and is required for correct chromosome segregation and centromere/kinetochore function in mitosis. May be involved in response to DNA damage by genotoxic agents. In Saccharomyces cerevisiae (strain ATCC 204508 / S288c) (Baker's yeast), this protein is Histone acetyltransferase GCN5.